The sequence spans 161 residues: Nucleotide-binding protein Bpro_1596 (161 aa).

This sequence belongs to the YajQ family.

Its function is as follows. Nucleotide-binding protein. The protein is Nucleotide-binding protein Bpro_1596 of Polaromonas sp. (strain JS666 / ATCC BAA-500).